The chain runs to 480 residues: Phenylalanine--tRNA ligase alpha subunit (480 aa).

L-phenylalanine contacts are provided by Thr-324 and Phe-407. Glu-409 lines the Mg(2+) pocket. Phe-432 is an L-phenylalanine binding site.

This sequence belongs to the class-II aminoacyl-tRNA synthetase family. Phe-tRNA synthetase alpha subunit type 2 subfamily. Tetramer of two alpha and two beta subunits. Mg(2+) serves as cofactor.

The protein localises to the cytoplasm. It carries out the reaction tRNA(Phe) + L-phenylalanine + ATP = L-phenylalanyl-tRNA(Phe) + AMP + diphosphate + H(+). In Methanocaldococcus jannaschii (strain ATCC 43067 / DSM 2661 / JAL-1 / JCM 10045 / NBRC 100440) (Methanococcus jannaschii), this protein is Phenylalanine--tRNA ligase alpha subunit.